A 410-amino-acid polypeptide reads, in one-letter code: Neuroserpin (410 aa).

The signal sequence occupies residues 1–16 (MTYLELLALLALQSVV). Residues asparagine 157, asparagine 321, and asparagine 401 are each glycosylated (N-linked (GlcNAc...) asparagine). Serine 403 is a glycosylation site (O-linked (Xyl...) (chondroitin sulfate) serine).

It belongs to the serpin family. As to expression, detected in neurons in embryonic brain cortex (at protein level). During embryonic development mostly expressed in CNS. In adult expressed in brain and much less in spinal cord, heart, kidney and testis.

It localises to the secreted. The protein resides in the cytoplasmic vesicle. Its subcellular location is the secretory vesicle lumen. The protein localises to the perikaryon. In terms of biological role, serine protease inhibitor that inhibits plasminogen activators and plasmin but not thrombin. May be involved in the formation or reorganization of synaptic connections as well as for synaptic plasticity in the adult nervous system. May protect neurons from cell damage by tissue-type plasminogen activator. This Mus musculus (Mouse) protein is Neuroserpin (Serpini1).